A 696-amino-acid polypeptide reads, in one-letter code: Elongation factor G (696 aa).

A tr-type G domain is found at 8 to 290 (ERYRNIGISA…KVIELMPAPT (283 aa)). Residues 17 to 24 (AHIDAGKT), 88 to 92 (DTPGH), and 142 to 145 (NKMD) each bind GTP.

This sequence belongs to the TRAFAC class translation factor GTPase superfamily. Classic translation factor GTPase family. EF-G/EF-2 subfamily.

It is found in the cytoplasm. Functionally, catalyzes the GTP-dependent ribosomal translocation step during translation elongation. During this step, the ribosome changes from the pre-translocational (PRE) to the post-translocational (POST) state as the newly formed A-site-bound peptidyl-tRNA and P-site-bound deacylated tRNA move to the P and E sites, respectively. Catalyzes the coordinated movement of the two tRNA molecules, the mRNA and conformational changes in the ribosome. The protein is Elongation factor G of Thiobacillus denitrificans (strain ATCC 25259 / T1).